The primary structure comprises 579 residues: Copine-E (579 aa).

C2 domains are found at residues 45–175 (IDPS…KVIG) and 183–304 (QTGT…EFTL). The Ca(2+) site is built by D80, D86, D145, D147, and D153. In terms of domain architecture, VWFA spans 345–552 (NLMIAIDCTA…KKYENDPEQL (208 aa)).

This sequence belongs to the copine family. Requires Ca(2+) as cofactor.

The chain is Copine-E (cpnE) from Dictyostelium discoideum (Social amoeba).